We begin with the raw amino-acid sequence, 158 residues long: Phosphopantetheine adenylyltransferase (158 aa).

Residue Thr-10 participates in substrate binding. ATP-binding positions include 10–11 and His-18; that span reads TF. Substrate contacts are provided by Lys-42, Leu-74, and Arg-88. Residues 89-91, Glu-99, and 124-130 contribute to the ATP site; these read GIR and WRYLSST.

The protein belongs to the bacterial CoaD family. As to quaternary structure, homohexamer. Mg(2+) serves as cofactor.

It localises to the cytoplasm. It carries out the reaction (R)-4'-phosphopantetheine + ATP + H(+) = 3'-dephospho-CoA + diphosphate. The protein operates within cofactor biosynthesis; coenzyme A biosynthesis; CoA from (R)-pantothenate: step 4/5. Functionally, reversibly transfers an adenylyl group from ATP to 4'-phosphopantetheine, yielding dephospho-CoA (dPCoA) and pyrophosphate. In Actinobacillus pleuropneumoniae serotype 3 (strain JL03), this protein is Phosphopantetheine adenylyltransferase.